Reading from the N-terminus, the 304-residue chain is MLPKVLFLMGPTASGKTALALELAENHNCEIISVDSALIYRGMDIGSAKPSIEELARGPHRLIDIRDPSESYSAADFRADALAEIEQIIRMGKTPLLVGGTMMYFKALLEGLSPLPSADDAIRADIQAEADAKGWETLHDQLRDIDPVSAERIHPNDPQRLSRALEVYRISGKSLTELTQTKSAPLPYDVVQFAIAPRERKVLHDLIAQRFRIMLQQGFIGEVTQLKARGDLHLDLPSMRCVGYRQCWQHLDGEFDYDTMVEKAVAATRQLAKRQLTWLRSWPELNWLESGAEGNLVTLMRHCR.

10–17 (GPTASGKT) lines the ATP pocket. 12-17 (TASGKT) lines the substrate pocket. 3 interaction with substrate tRNA regions span residues 35–38 (DSAL), 159–163 (QRLSR), and 240–245 (RCVGYR).

Belongs to the IPP transferase family. Monomer. The cofactor is Mg(2+).

The enzyme catalyses adenosine(37) in tRNA + dimethylallyl diphosphate = N(6)-dimethylallyladenosine(37) in tRNA + diphosphate. Functionally, catalyzes the transfer of a dimethylallyl group onto the adenine at position 37 in tRNAs that read codons beginning with uridine, leading to the formation of N6-(dimethylallyl)adenosine (i(6)A). This Shewanella sp. (strain W3-18-1) protein is tRNA dimethylallyltransferase.